Consider the following 179-residue polypeptide: Probable chorismate pyruvate-lyase (179 aa).

3 residues coordinate substrate: Arg82, Leu120, and Glu165.

The protein belongs to the UbiC family.

Its subcellular location is the cytoplasm. It catalyses the reaction chorismate = 4-hydroxybenzoate + pyruvate. It participates in cofactor biosynthesis; ubiquinone biosynthesis. Functionally, removes the pyruvyl group from chorismate, with concomitant aromatization of the ring, to provide 4-hydroxybenzoate (4HB) for the ubiquinone pathway. The polypeptide is Probable chorismate pyruvate-lyase (Vibrio cholerae serotype O1 (strain ATCC 39315 / El Tor Inaba N16961)).